Reading from the N-terminus, the 400-residue chain is CCA-adding enzyme (400 aa).

ATP-binding residues include Gly28 and Arg31. CTP contacts are provided by Gly28 and Arg31. Asp41 and Asp43 together coordinate Mg(2+). Residues Arg112, Asp155, Arg158, Arg161, and Arg164 each contribute to the ATP site. Arg112, Asp155, Arg158, Arg161, and Arg164 together coordinate CTP.

Belongs to the tRNA nucleotidyltransferase/poly(A) polymerase family. Bacterial CCA-adding enzyme type 3 subfamily. As to quaternary structure, homodimer. Requires Mg(2+) as cofactor.

The enzyme catalyses a tRNA precursor + 2 CTP + ATP = a tRNA with a 3' CCA end + 3 diphosphate. It carries out the reaction a tRNA with a 3' CCA end + 2 CTP + ATP = a tRNA with a 3' CCACCA end + 3 diphosphate. Its function is as follows. Catalyzes the addition and repair of the essential 3'-terminal CCA sequence in tRNAs without using a nucleic acid template. Adds these three nucleotides in the order of C, C, and A to the tRNA nucleotide-73, using CTP and ATP as substrates and producing inorganic pyrophosphate. tRNA 3'-terminal CCA addition is required both for tRNA processing and repair. Also involved in tRNA surveillance by mediating tandem CCA addition to generate a CCACCA at the 3' terminus of unstable tRNAs. While stable tRNAs receive only 3'-terminal CCA, unstable tRNAs are marked with CCACCA and rapidly degraded. This chain is CCA-adding enzyme, found in Staphylococcus haemolyticus (strain JCSC1435).